A 642-amino-acid polypeptide reads, in one-letter code: MAGPPGEEVWRCLGCGDLIAAGQRLYRMVNEAWHISCFRCSECQDPLTNWYYEKDGKLYCHKDYWGKFGESCHGCSLLMTGPVMVAGEYKYHPECFACMSCKVIIEDGDTYALVQHSTLYCGKCHNQIVLTPMIEKHSTESLREQLPYTLTLISMPAATDGKRGFSVSVEGGCSSYATGVQVKEVNRMHISPDVRNAIHPADRILEINGAPIRTLQVEEVEDLIRKTSQTLQLLIEHDPVSQRLDRLRLDSRLPTHIKSPISPHSISPLDIKENLEGTLRRRSLRRSNSISKSPGPSSPKEPLLLSRDISRSESLRSSSSCSQQIFRPCDLIHGEVLGKGFFGQAIKVTHKATGKVMVMKELIRCDEETQKTFLTEVKVMRSLDHPNVLKFIGVLYKDKKLNLLTEYIEGGTLKDFLRNADPFPWQQKVSFAKGIASGMAYLHSMCIIHRDLNSHNCLIKLDKTVVVADFGLSRLIVEERKKPTLEKPSAKKRTLRKSDRKKRYTVVGNPYWMAPEMLNGQSYDETVDIFSFGIVLCEIIGQVYADPDCLPRTLDFGLNVKLFWEKFVPADCPPAFFPLAAICCRLEPESRPPFSKLEDSFEALSLYLGELAIPLPSELEELDHNVSVQYGLNRDKLPENTT.

LIM zinc-binding domains lie at 12 to 63 (CLGC…CHKD) and 72 to 124 (CHGC…CGKC). A PDZ domain is found at 152-239 (LISMPAATDG…TLQLLIEHDP (88 aa)). The interval 282-304 (RSLRRSNSISKSPGPSSPKEPLL) is disordered. Over residues 286 to 304 (RSNSISKSPGPSSPKEPLL) the composition is skewed to low complexity. Residues 331 to 608 (LIHGEVLGKG…DSFEALSLYL (278 aa)) enclose the Protein kinase domain. ATP-binding positions include 337 to 345 (LGKGFFGQA) and Lys360. Asp451 is an active-site residue. Thr505 bears the Phosphothreonine mark.

The protein belongs to the protein kinase superfamily. TKL Ser/Thr protein kinase family. Binds ROCK1 and LKAP. In terms of tissue distribution, expressed predominantly in the lung, and faintly in the kidney, liver, brain, spleen, gizzard, and intestine.

It localises to the cytoplasm. It is found in the cytoskeleton. The protein localises to the spindle. The protein resides in the microtubule organizing center. Its subcellular location is the centrosome. The enzyme catalyses L-seryl-[protein] + ATP = O-phospho-L-seryl-[protein] + ADP + H(+). It catalyses the reaction L-threonyl-[protein] + ATP = O-phospho-L-threonyl-[protein] + ADP + H(+). Serine/threonine-protein kinase that plays an essential role in the regulation of actin filament dynamics. Acts downstream of several Rho family GTPase signal transduction pathways. Involved in astral microtubule organization and mitotic spindle orientation during early stages of mitosis by mediating phosphorylation of TPPP. In Gallus gallus (Chicken), this protein is LIM domain kinase 2 (LIMK2).